The following is a 93-amino-acid chain: MGTKCYSKLRYVVVLVLLLFVFPCSLSQSAPSSVTGRRLMGIYMPNGGIIAGSSPSGQAPNINNNYHGRRLMISEARPSKSKKGGGREPESPG.

Positions 1–27 (MGTKCYSKLRYVVVLVLLLFVFPCSLS) are cleaved as a signal peptide. Short sequence motifs (SCOOP motif) lie at residues 48 to 62 (GIIAGSSPSGQAPNI) and 73 to 87 (ISEARPSKSKKGGGR). The disordered stretch occupies residues 52–93 (GSSPSGQAPNINNNYHGRRLMISEARPSKSKKGGGREPESPG). Positions 53–66 (SSPSGQAPNINNNY) are enriched in polar residues. Short sequence motifs (sxS motif essential for MIK2 binding) lie at residues 54-56 (SPS) and 79-81 (SKS).

This sequence belongs to the serine rich endogenous peptide (SCOOP) phytocytokine family. Interacts with MIK2 (via extracellular leucine-rich repeat domain); this interaction triggers the formation of complex between MIK2 and the BAK1/SERK3 and SERK4 coreceptors, and subsequent BAK1 activation by phosphorylation. As to expression, mostly expressed in seedlings shoots, and, to a lower extent, in roots.

The protein localises to the cell membrane. Its subcellular location is the secreted. It is found in the extracellular space. It localises to the apoplast. Functionally, brassicaceae-specific phytocytokine (plant endogenous peptide released into the apoplast) perceived by MIK2 in a BAK1/SERK3 and SERK4 coreceptors-dependent manner, that modulates various physiological and antimicrobial processes including growth prevention and reactive oxygen species (ROS) response regulation. Inhibits root growth. This Arabidopsis thaliana (Mouse-ear cress) protein is Serine rich endogenous peptide 6.